Consider the following 724-residue polypeptide: Probable serine/threonine-protein kinase KKQ8 (724 aa).

Disordered stretches follow at residues methionine 1–serine 81 and histidine 93–leucine 188. Serine 19 is subject to Phosphoserine. Residues proline 45–lysine 54 show a composition bias toward low complexity. Polar residues predominate over residues phenylalanine 95–proline 106. The segment covering arginine 143–serine 162 has biased composition (low complexity). Serine 232, serine 238, and serine 241 each carry phosphoserine. 2 stretches are compositionally biased toward polar residues: residues asparagine 318 to serine 329 and glycine 338 to glutamine 351. The disordered stretch occupies residues asparagine 318–aspartate 355. One can recognise a Protein kinase domain in the interval glycine 412–methionine 712. Residues valine 418–valine 426 and lysine 455 contribute to the ATP site. The active-site Proton acceptor is aspartate 563.

Belongs to the protein kinase superfamily. CAMK Ser/Thr protein kinase family. NPR/HAL subfamily. HAL5 sub-subfamily.

The protein resides in the cytoplasm. It carries out the reaction L-seryl-[protein] + ATP = O-phospho-L-seryl-[protein] + ADP + H(+). The catalysed reaction is L-threonyl-[protein] + ATP = O-phospho-L-threonyl-[protein] + ADP + H(+). This is Probable serine/threonine-protein kinase KKQ8 (KKQ8) from Saccharomyces cerevisiae (strain YJM789) (Baker's yeast).